The following is a 566-amino-acid chain: Bacillolysin (566 aa).

An N-terminal signal peptide occupies residues 1 to 27 (MKKKSLALVLATGMAVTTFGGTGSAFA). Residues 28 to 249 (DSKNVLSTKK…KQDAKAVVKP (222 aa)) constitute a propeptide, activation peptide. The Ca(2+) site is built by aspartate 307, aspartate 309, valine 311, and aspartate 388. Zn(2+) is bound at residue histidine 392. The active site involves glutamate 393. Zn(2+)-binding residues include histidine 396 and glutamate 416. The Ca(2+) site is built by glutamate 427, asparagine 433, aspartate 435, glutamate 437, glutamate 440, tyrosine 443, threonine 444, lysine 447, and aspartate 450. Residue histidine 481 is the Proton donor of the active site.

This sequence belongs to the peptidase M4 family. The cofactor is Ca(2+). Requires Zn(2+) as cofactor.

The protein resides in the secreted. The catalysed reaction is Similar, but not identical, to that of thermolysin.. Its function is as follows. Extracellular zinc metalloprotease. The chain is Bacillolysin (npr) from Bacillus cereus.